The following is a 428-amino-acid chain: Serine--tRNA ligase (428 aa).

235–237 contributes to the L-serine binding site; sequence TAE. ATP is bound at residue 266 to 268; that stretch reads RSE. An L-serine-binding site is contributed by Glu-289. An ATP-binding site is contributed by 353-356; the sequence is EISS. Ser-389 provides a ligand contact to L-serine.

The protein belongs to the class-II aminoacyl-tRNA synthetase family. Type-1 seryl-tRNA synthetase subfamily. As to quaternary structure, homodimer. The tRNA molecule binds across the dimer.

Its subcellular location is the cytoplasm. The enzyme catalyses tRNA(Ser) + L-serine + ATP = L-seryl-tRNA(Ser) + AMP + diphosphate + H(+). It catalyses the reaction tRNA(Sec) + L-serine + ATP = L-seryl-tRNA(Sec) + AMP + diphosphate + H(+). Its pathway is aminoacyl-tRNA biosynthesis; selenocysteinyl-tRNA(Sec) biosynthesis; L-seryl-tRNA(Sec) from L-serine and tRNA(Sec): step 1/1. Its function is as follows. Catalyzes the attachment of serine to tRNA(Ser). Is also able to aminoacylate tRNA(Sec) with serine, to form the misacylated tRNA L-seryl-tRNA(Sec), which will be further converted into selenocysteinyl-tRNA(Sec). This chain is Serine--tRNA ligase, found in Shewanella pealeana (strain ATCC 700345 / ANG-SQ1).